Here is a 264-residue protein sequence, read N- to C-terminus: Apolipoprotein A-I (264 aa).

A signal peptide spans 1 to 18; the sequence is MKAVVLTVAVLFLTGSQA. 2 repeat units span residues 67–88 and 89–110. A 10 X approximate tandem repeats region spans residues 67 to 264; it reads LKLLDNWDSL…DEATKKLNTQ (198 aa). Residue Met109 is modified to Methionine sulfoxide. The stretch at 111 to 121 is one 3; half-length repeat; it reads KDLEEVKRKVQ. 3 tandem repeats follow at residues 122–143, 144–165, and 166–187. The stretch at 188–207 is one 7; truncated repeat; sequence PYSDELRQRLAARLEALKEG. Copy 8 of the repeat occupies 208–229; sequence SSFAEYQAKATEHLSALGEKAK. Residues 230–240 form a 9; half-length repeat; sequence PALEDLRQGLL. Copy 10 of the repeat occupies 241–264; it reads PVLESLKLSFWSAVDEATKKLNTQ.

The protein belongs to the apolipoprotein A1/A4/E family. Homodimer. Interacts with APOA1BP and CLU. Component of a sperm activating protein complex (SPAP), consisting of APOA1, an immunoglobulin heavy chain, an immunoglobulin light chain and albumin. Interacts with NDRG1. Interacts with SCGB3A2. Interacts with NAXE and YJEFN3. Post-translationally, glycosylated. In terms of processing, palmitoylated. Phosphorylation sites are present in the extracellular medium.

It localises to the secreted. In terms of biological role, participates in the reverse transport of cholesterol from tissues to the liver for excretion by promoting cholesterol efflux from tissues and by acting as a cofactor for the lecithin cholesterol acyltransferase (LCAT). As part of the SPAP complex, activates spermatozoa motility. This Ictidomys tridecemlineatus (Thirteen-lined ground squirrel) protein is Apolipoprotein A-I (APOA1).